Reading from the N-terminus, the 134-residue chain is Ribonuclease P protein component 2 (134 aa).

It belongs to the eukaryotic/archaeal RNase P protein component 2 family. As to quaternary structure, consists of a catalytic RNA component and at least 4-5 protein subunits. Forms a subcomplex with Rnp3 which stimulates the catalytic RNA.

Its subcellular location is the cytoplasm. It catalyses the reaction Endonucleolytic cleavage of RNA, removing 5'-extranucleotides from tRNA precursor.. In terms of biological role, part of ribonuclease P, a protein complex that generates mature tRNA molecules by cleaving their 5'-ends. This chain is Ribonuclease P protein component 2, found in Methanocaldococcus jannaschii (strain ATCC 43067 / DSM 2661 / JAL-1 / JCM 10045 / NBRC 100440) (Methanococcus jannaschii).